We begin with the raw amino-acid sequence, 504 residues long: Sodium-coupled neutral amino acid symporter 2 (504 aa).

The interval 1–22 is disordered; it reads MKKTEMGRFNISPDEDSSSYSS. The Cytoplasmic portion of the chain corresponds to 1–76; that stretch reads MKKTEMGRFN…HPGTTSFGMS (76 aa). The interval 1 to 96 is regulates protein turnover upon amino acid deprivation; it reads MKKTEMGRFN…SGILGLSYAM (96 aa). Residues Ser12, Ser21, Ser22, and Ser55 each carry the phosphoserine modification. A helical transmembrane segment spans residues 77-96; the sequence is VFNLSNAIVGSGILGLSYAM. Asn82 provides a ligand contact to Na(+). The Extracellular segment spans residues 97 to 102; the sequence is ANTGIA. Residues 103–123 form a helical membrane-spanning segment; that stretch reads LFIILLTFVSIFSLYSVHLLL. The Cytoplasmic portion of the chain corresponds to 124 to 158; the sequence is KTANEGGSLLYEQLGHKAYGLAGKLAASGSITMQN. Residues 159-177 traverse the membrane as a helical segment; it reads IGAMSSYLFIVKYELPLVI. Residues 178–188 lie on the Extracellular side of the membrane; it reads KALMNIEDTNG. Residues 189–209 traverse the membrane as a helical segment; the sequence is LWYLNGDYLVLLVSFVLILPL. Residues 210–217 lie on the Cytoplasmic side of the membrane; it reads SLLRNLGY. Residues 218 to 238 traverse the membrane as a helical segment; the sequence is LGYTSGLSLLCMIFFLIVVIC. Residues 239–290 are Extracellular-facing; that stretch reads KKFQIPCPVEVALMANETVNGTFTQVALAALASNSTAADTCRPRYFIFNSQT. An intrachain disulfide couples Cys245 to Cys279. 3 N-linked (GlcNAc...) asparagine glycosylation sites follow: Asn254, Asn258, and Asn272. The chain crosses the membrane as a helical span at residues 291-311; the sequence is VYAVPILTFSFVCHPAVLPIY. Topologically, residues 312–327 are cytoplasmic; it reads EELKSRSRRRMMNVSK. A helical membrane pass occupies residues 328 to 348; the sequence is ISFFAMFLMYLLAALFGYLTF. Residues 349–369 are Extracellular-facing; that stretch reads YEHVESELLHTYSAIVGTDIL. A helical membrane pass occupies residues 370–390; sequence LLVVRLAVLVAVTLTVPVVIF. Thr384 is a Na(+) binding site. At 391 to 411 the chain is on the cytoplasmic side; that stretch reads PIRSSVTHLLCPTKEFSWFRH. A helical membrane pass occupies residues 412–432; sequence SVITVTILAFTNLLVIFVPTI. Residues 433–434 lie on the Extracellular side of the membrane; sequence RD. The chain crosses the membrane as a helical span at residues 435–455; it reads IFGFIGASAAAMLIFILPSAF. The Cytoplasmic portion of the chain corresponds to 456-470; the sequence is YIKLVKKEPMRSVQK. A helical membrane pass occupies residues 471–493; it reads IGALCFLLSGVVVMIGSMGLIVL. Residues 494 to 504 are Extracellular-facing; sequence DWVHDASAGGH.

Belongs to the amino acid/polyamine transporter 2 family. Post-translationally, polyubiquitination by NEDD4L regulates the degradation and the activity of SLC38A2. In terms of tissue distribution, widely expressed. Expressed in skeletal muscle and adipose tissue (at protein level). Expressed by glutamatergic and GABAergic neurons together with astrocytes and other non-neuronal cells in the cerebral cortex (at protein level). Widely expressed in the central nervous systeme where, it is enriched in the spinal cord and the brainstem nuclei, especially those of the auditory system.

Its subcellular location is the cell membrane. The enzyme catalyses L-alanine(in) + Na(+)(in) = L-alanine(out) + Na(+)(out). It catalyses the reaction glycine(in) + Na(+)(in) = glycine(out) + Na(+)(out). It carries out the reaction L-serine(in) + Na(+)(in) = L-serine(out) + Na(+)(out). The catalysed reaction is L-proline(in) + Na(+)(in) = L-proline(out) + Na(+)(out). The enzyme catalyses L-methionine(in) + Na(+)(in) = L-methionine(out) + Na(+)(out). It catalyses the reaction L-histidine(in) + Na(+)(in) = L-histidine(out) + Na(+)(out). It carries out the reaction L-asparagine(in) + Na(+)(in) = L-asparagine(out) + Na(+)(out). The catalysed reaction is L-glutamine(in) + Na(+)(in) = L-glutamine(out) + Na(+)(out). The enzyme catalyses L-threonine(in) + Na(+)(in) = L-threonine(out) + Na(+)(out). It catalyses the reaction L-leucine(in) + Na(+)(in) = L-leucine(out) + Na(+)(out). It carries out the reaction L-phenylalanine(in) + Na(+)(in) = L-phenylalanine(out) + Na(+)(out). Its activity is regulated as follows. Inhibited by N-methyl-D-glucamine. Inhibited by choline. Allosteric regulation of sodium ions binding by pH. Functionally, symporter that cotransports neutral amino acids and sodium ions from the extracellular to the intracellular side of the cell membrane. The transport is pH-sensitive, Li(+)-intolerant, electrogenic, driven by the Na(+) electrochemical gradient and cotransports of neutral amino acids and sodium ions with a stoichiometry of 1:1. May function in the transport of amino acids at the blood-brain barrier. May function in the transport of amino acids in the supply of maternal nutrients to the fetus through the placenta. Maintains a key metabolic glutamine/glutamate balance underpinning retrograde signaling by dendritic release of the neurotransmitter glutamate. Transports L-proline in differentiating osteoblasts for the efficient synthesis of proline-enriched proteins and provides proline essential for osteoblast differentiation and bone formation during bone development. The protein is Sodium-coupled neutral amino acid symporter 2 of Rattus norvegicus (Rat).